We begin with the raw amino-acid sequence, 335 residues long: Acetyl-coenzyme A carboxylase carboxyl transferase subunit alpha (335 aa).

The 255-residue stretch at 40–294 folds into the CoA carboxyltransferase C-terminal domain; sequence QLETLAARRR…KEAIEKHLNA (255 aa).

Belongs to the AccA family. As to quaternary structure, acetyl-CoA carboxylase is a heterohexamer composed of biotin carboxyl carrier protein (AccB), biotin carboxylase (AccC) and two subunits each of ACCase subunit alpha (AccA) and ACCase subunit beta (AccD).

The protein resides in the cytoplasm. The enzyme catalyses N(6)-carboxybiotinyl-L-lysyl-[protein] + acetyl-CoA = N(6)-biotinyl-L-lysyl-[protein] + malonyl-CoA. Its pathway is lipid metabolism; malonyl-CoA biosynthesis; malonyl-CoA from acetyl-CoA: step 1/1. In terms of biological role, component of the acetyl coenzyme A carboxylase (ACC) complex. First, biotin carboxylase catalyzes the carboxylation of biotin on its carrier protein (BCCP) and then the CO(2) group is transferred by the carboxyltransferase to acetyl-CoA to form malonyl-CoA. The polypeptide is Acetyl-coenzyme A carboxylase carboxyl transferase subunit alpha (Prochlorococcus marinus (strain AS9601)).